A 651-amino-acid polypeptide reads, in one-letter code: Nucleolin (651 aa).

Residues 1-11 (MVKLAKGAKTQ) are compositionally biased toward low complexity. The segment at 1-230 (MVKLAKGAKT…AKKTKTDTAS (230 aa)) is disordered. Positions 26–45 (EDSEEEEDMEEDDSSDEEVE) are enriched in acidic residues. A compositionally biased stretch (low complexity) spans 54–79 (KKTATPAKATPGKAATPGKKGATPAK). Acidic residues predominate over residues 89–101 (SEEEEDDSDEEAE). Over residues 106 to 116 (IKNKPVAKKAV) the composition is skewed to basic residues. 3 stretches are compositionally biased toward acidic residues: residues 122 to 134 (SEED…ESEE), 155 to 168 (SEEE…DEPM), and 183 to 204 (AEED…EEEQ). The residue at position 155 (Ser-155) is a Phosphoserine. Residues 219-228 (PEAKKTKTDT) show a composition bias toward basic and acidic residues. 4 RRM domains span residues 233 to 309 (LSIF…KAMA), 325 to 399 (RTLF…FTGE), 415 to 488 (KVLV…FSQG), and 503 to 578 (KTLF…FAKP). The segment at 574 to 651 (DFAKPKGDSQ…GQGKKMRFDD (78 aa)) is disordered. Residues 585–644 (GGRGGFGRGGGFRGGRGGRGGGGGRGFGGRGGGRGRGGFGGRGGGGFRGGQGGGFRGGQG) show a composition bias toward gly residues.

It localises to the nucleus. The protein localises to the nucleolus. Functionally, nucleolin is the major nucleolar protein of growing eukaryotic cells. It is found associated with intranucleolar chromatin and pre-ribosomal particles. It induces chromatin decondensation by binding to histone H1. It is thought to play a role in pre-rRNA transcription and ribosome assembly. This Xenopus laevis (African clawed frog) protein is Nucleolin (ncl).